The following is a 264-amino-acid chain: Myozenin-2 (264 aa).

Arg-53 bears the Omega-N-methylarginine mark. The interval 90 to 135 is disordered; it reads GKVDGSNLEGGSQQAPLTPPNTPDPRSPPNPDNIAPGYSGPLKEIP. Phosphoserine is present on Ser-101. The span at 106–120 shows a compositional bias: pro residues; that stretch reads LTPPNTPDPRSPPNP. Residues Thr-107 and Thr-111 each carry the phosphothreonine modification. A Phosphoserine modification is found at Ser-116.

It belongs to the myozenin family. Interacts via its C-terminus with spectrin repeats 3 and 4 of ACTN2. Interacts with ACTN1, LDB3, MYOT and PPP3CA.

Its subcellular location is the cytoplasm. It localises to the myofibril. The protein resides in the sarcomere. It is found in the z line. Its function is as follows. Myozenins may serve as intracellular binding proteins involved in linking Z line proteins such as alpha-actinin, gamma-filamin, TCAP/telethonin, LDB3/ZASP and localizing calcineurin signaling to the sarcomere. Plays an important role in the modulation of calcineurin signaling. May play a role in myofibrillogenesis. This is Myozenin-2 (MYOZ2) from Pongo abelii (Sumatran orangutan).